A 392-amino-acid polypeptide reads, in one-letter code: Keratin, type I cuticular Ha4 (392 aa).

The head stretch occupies residues 1-56; the sequence is MSCESCLPALSCRTSCSSRPCVPPSCHGCTLPGACNIPANVGNCNWFCEGSFNGNE. Residues 56 to 367 enclose the IF rod domain; sequence EKETMQFLND…SLLESEDCNL (312 aa). A coil 1A region spans residues 57 to 91; the sequence is KETMQFLNDRLASYMEKVRQLERENAELECRIQER. The tract at residues 92-102 is linker 1; that stretch reads NQQQDPLVCPA. The segment at 103 to 203 is coil 1B; it reads YQAYFRTIEE…HEEEVNTLRC (101 aa). Residues 204–219 are linker 12; that stretch reads QLGDRLNVEVDAAPTV. Positions 220-363 are coil 2; sequence DLNRVLNETR…NTYRSLLESE (144 aa). Residues 364–392 are tail; the sequence is DCNLPCNPCATTNASGSCCGPCGSSKRCC.

The protein belongs to the intermediate filament family. Expressed in the hair root in the hair shaft cuticle and cortex.

The polypeptide is Keratin, type I cuticular Ha4 (Mus musculus (Mouse)).